Consider the following 408-residue polypeptide: MKDVLERFLGYIRIDTQSSEESDTVPTTKTQLEFAKKLGEELKAIGLKDVSVDENGYVMATLESNIDKKVPTIGFIAHMDTSPDLSGTNINPRIVEKYDGQDIVLNKEKNIVLKINEFPEILEYKGQDIVVTDGNTLLGADDKAGIAEIITAMEYLINHPEIKHGTIKVGFTPDEEVGKGADHFDVKKFGADLAYTLDGGGIGELECETFNAAKAKVIIEGRNVHPGSAKNKMTNAVLVANKFINMLPENEVPERTEGYEGFFHLLSVKSEVETAELNYIIRDFDRKKFEERKEQIKEVGKKINEEYNKEIVCVKVEDQYYNMKEKIDEVKYVVDIAHDAMKAIDIEPILVPIRGGTDGSRLSFMGLPTPNLFAGGHNFHGRFEFVPVLSMEKAAELVVKIAELYANR.

Residue histidine 78 coordinates Zn(2+). Residue aspartate 80 is part of the active site. Aspartate 141 serves as a coordination point for Zn(2+). The active-site Proton acceptor is the glutamate 175. Glutamate 176, aspartate 198, and histidine 380 together coordinate Zn(2+).

Belongs to the peptidase M20B family. It depends on Zn(2+) as a cofactor.

The protein resides in the cytoplasm. It catalyses the reaction Release of the N-terminal residue from a tripeptide.. Its function is as follows. Cleaves the N-terminal amino acid of tripeptides. The protein is Peptidase T of Clostridium botulinum (strain 657 / Type Ba4).